A 341-amino-acid polypeptide reads, in one-letter code: Heat-inducible transcription repressor HrcA (341 aa).

This sequence belongs to the HrcA family.

In terms of biological role, negative regulator of class I heat shock genes (grpE-dnaK-dnaJ and groELS operons). Prevents heat-shock induction of these operons. In Brevibacillus brevis (strain 47 / JCM 6285 / NBRC 100599), this protein is Heat-inducible transcription repressor HrcA.